Here is a 35-residue protein sequence, read N- to C-terminus: Photosystem II reaction center protein T (35 aa).

The chain crosses the membrane as a helical span at residues 3 to 23; it reads ALVYTFLLVSTLGIIFFAIFF.

It belongs to the PsbT family. As to quaternary structure, PSII is composed of 1 copy each of membrane proteins PsbA, PsbB, PsbC, PsbD, PsbE, PsbF, PsbH, PsbI, PsbJ, PsbK, PsbL, PsbM, PsbT, PsbY, PsbZ, Psb30/Ycf12, at least 3 peripheral proteins of the oxygen-evolving complex and a large number of cofactors. It forms dimeric complexes.

It is found in the plastid. It localises to the chloroplast thylakoid membrane. Its function is as follows. Found at the monomer-monomer interface of the photosystem II (PS II) dimer, plays a role in assembly and dimerization of PSII. PSII is a light-driven water plastoquinone oxidoreductase, using light energy to abstract electrons from H(2)O, generating a proton gradient subsequently used for ATP formation. The sequence is that of Photosystem II reaction center protein T from Pinus thunbergii (Japanese black pine).